We begin with the raw amino-acid sequence, 184 residues long: Oligoribonuclease (184 aa).

The 164-residue stretch at 7-170 (LIWIDLEMTG…DDIYESIEEL (164 aa)) folds into the Exonuclease domain. The active site involves tyrosine 128.

It belongs to the oligoribonuclease family.

The protein localises to the cytoplasm. In terms of biological role, 3'-to-5' exoribonuclease specific for small oligoribonucleotides. This chain is Oligoribonuclease, found in Hydrogenovibrio crunogenus (strain DSM 25203 / XCL-2) (Thiomicrospira crunogena).